Reading from the N-terminus, the 702-residue chain is Kinesin-like protein KIF3A (702 aa).

In terms of domain architecture, Kinesin motor spans 14–345 (NVKVVVRCRP…LRYANRAKNI (332 aa)). 100-107 (GQTGTGKT) provides a ligand contact to ATP. Residues 355–593 (PKDALLRQFQ…LSRELRLQML (239 aa)) are a coiled coil. Disordered regions lie at residues 372–424 (KKLE…KMIE) and 667–702 (LMKL…SLLQ). Residues 376-400 (EGEEISGSDISGSEEDDDEEGEVGE) are compositionally biased toward acidic residues. The segment covering 410–424 (DQAGKKKVSPDKMIE) has biased composition (basic and acidic residues). Positions 600–702 (PRDYQEMIEN…PETVIDSLLQ (103 aa)) are globular. Positions 675 to 690 (TSKGKARPKTGRRKRS) are enriched in basic residues. Position 690 is a phosphoserine (serine 690).

This sequence belongs to the TRAFAC class myosin-kinesin ATPase superfamily. Kinesin family. Kinesin II subfamily. Heterodimer of KIF3A and KIF3B. Interacts with CIMAP3. Interacts with CLN3. Interacts with DCTN1. Interacts with FLCN. Interacts with AP3B1.

Its subcellular location is the cytoplasm. The protein resides in the cytoskeleton. It is found in the cell projection. It localises to the cilium. The protein localises to the microtubule organizing center. Its subcellular location is the centrosome. The protein resides in the centriole. Its function is as follows. Microtubule-based anterograde translocator for membranous organelles. Plus end-directed microtubule sliding activity in vitro. Plays a role in primary cilia formation. Plays a role in centriole cohesion and subdistal appendage organization and function. Regulates the formation of the subdistal appendage via recruitment of DCTN1 to the centriole. Also required for ciliary basal feet formation and microtubule anchoring to mother centriole. This chain is Kinesin-like protein KIF3A (KIF3A), found in Macaca fascicularis (Crab-eating macaque).